The following is a 191-amino-acid chain: Protein G1-like1 (191 aa).

Positions 1–29 (MDMIGMASPAESPGGGGTARPSRYESQKR) are disordered. The region spanning 23–150 (RYESQKRRDW…ARGIAYEKKR (128 aa)) is the ALOG domain. A Nuclear localization signal motif is present at residues 148-152 (KKRRK). A coiled-coil region spans residues 152 to 179 (KRAAASHTKQKQQQQQLVEQAAAAAEAH).

This sequence belongs to the plant homeotic and developmental regulators ALOG protein family.

Its subcellular location is the nucleus. Its function is as follows. Probable transcription regulator that acts as a developmental regulator by promoting cell growth in response to light. The protein is Protein G1-like1 of Oryza sativa subsp. indica (Rice).